A 147-amino-acid chain; its full sequence is RxLR effector protein Avr3a (147 aa).

The signal sequence occupies residues 1–21; sequence MRLAIMLSATAVAINFATSSA. The RxLR-dEER signature appears at 44–59; the sequence is RLLRKNEENEETSEER. An N6-acetyllysine modification is found at Lys48. The effector domain stretch occupies residues 77–147; sequence ALTERADAKK…YMMHLGLTGY (71 aa).

It belongs to the RxLR effector family. Forms homodimers via the RxLR-dEER motif. Interacts with host E3 ligase CMPG1. Interacts with host DRP2. In terms of processing, proteolytically cleaved. The cleavage site directly after the RxLR sequence and the high conservation among other effector proteins suggest that the RxLR motif might play a crucial role in the intracellular processing before secretion. Post-translationally, glycosylated. N-acetylated at Lys-48 after cleavage.

The protein resides in the secreted. The protein localises to the host cytoplasm. Multifunctional effector that can suppress host BAK1/SERK3-mediated immunity through at least two different pathways. Manipulates plant immunity by targeting and stabilizing host E3 ligase CMPG1. Preventing the normal 26S proteasome-dependent degradation of potato CMPG1, and thus potentially of its protein substrates in the host cell, further abolishes host cell death during the biotrophic phase of infection. Also associates with and affects the function of the dynamin-related protein 2 (DRP2), a plant GTPase involved in immune receptor-mediated endocytosis. The Avr3a(EM) form evades recognition by R3a, thus does not trigger R3a-mediated hypersensitivity and does not suppress INF1-induced cell death. In Phytophthora infestans (Potato late blight agent), this protein is RxLR effector protein Avr3a.